Consider the following 946-residue polypeptide: MIGALARKFFGSANDRRVKGYQSRVNAINALEPELIKLSDEELKARTADFKKQLAEGKTLDDLLVPAFATVREAAKRTLGQRHFDVQLIGGMVLHEGDIAEMKTGEGKTLVATLAVYLNALAGKGVHVVTVNDYLARRDSGWMGQIYGFLGMTTGVIVHGLDDAERKTAYACDITYGTNNEYGFDYLRDNMKYRLEDMVQRPHFFAIVDEVDSILIDEARTPLIISGPLDDRSDFYNTIDGFLPKLDKTDYDVDEKQRTVTLTEAGMEKIETLLRDAGQLKGESLYDVENVSVVHHINQALRAHTLFTRDKDYIVRDDEVVIIDEFTGRMMPGRRYSEGLHQALEAKEHVQVQPENQTLASITFQNYFRMYEKLAGMTGTAATEADELFDIYKLEVVEIPTNLSVARLDEDDEVYRTQKEKYAAILAEIERANARLQPVLVGTASIEKSEVLAEFLKSNGYKQIDFGKENALDKLYAAARAGKPSKLFAVLNARFHEQEAYIVAEAGVPGAITIATNMAGRGTDIKLGGSLEMRVPKETAGIEDEAEKARKIEQIKADVERFREIVLKAEEIVEIEPAKGSKPAKTVTKPGGLYIIGSERHESRRIDNQLRGRSGRQGDPGRSKFFLSLEDDLMRIFGSDRLDSMLQRLGLQEGEAIIHPWINKALEKAQQKVEARNFDIRKNLLKFDNVQNDQRKVIFDQRVDLMKDDSVAETVTDMRHAFIDDLVAKHVPEHAYAEQWDVAGLKEELKRVLDLDLPVDDWAKEEGIADEELLNRIENRADEHMAAKVAQWGPDVMRYVEKTILLQTLDHLWREHLIMLDHLRQVIGLRGYGQRDPLQEYKTEAFNLFQEMSAHLREAVTAQLMRVEIVPPEQEAPVLPPMEAHKFDPNTGEDEMALASVTLGAPASDAAQRDPKNPASWGKIGRNEDCPCGSGKKYKHCHGRYA.

Residues Gln87, 105–109 (GEGKT), and Asp524 each bind ATP. The segment at 905-926 (APASDAAQRDPKNPASWGKIGR) is disordered. The Zn(2+) site is built by Cys930, Cys932, Cys941, and His942.

It belongs to the SecA family. In terms of assembly, monomer and homodimer. Part of the essential Sec protein translocation apparatus which comprises SecA, SecYEG and auxiliary proteins SecDF-YajC and YidC. It depends on Zn(2+) as a cofactor.

The protein localises to the cell inner membrane. Its subcellular location is the cytoplasm. The catalysed reaction is ATP + H2O + cellular proteinSide 1 = ADP + phosphate + cellular proteinSide 2.. Part of the Sec protein translocase complex. Interacts with the SecYEG preprotein conducting channel. Has a central role in coupling the hydrolysis of ATP to the transfer of proteins into and across the cell membrane, serving both as a receptor for the preprotein-SecB complex and as an ATP-driven molecular motor driving the stepwise translocation of polypeptide chains across the membrane. The sequence is that of Protein translocase subunit SecA from Bradyrhizobium diazoefficiens (strain JCM 10833 / BCRC 13528 / IAM 13628 / NBRC 14792 / USDA 110).